The sequence spans 873 residues: Protein translocase subunit SecA (873 aa).

ATP-binding positions include Gln-85, 103–107 (GEGKT), and Asp-492. The segment covering 835 to 856 (RYAEEEGKQPIRKENQIGRNDD) has biased composition (basic and acidic residues). Residues 835–873 (RYAEEEGKQPIRKENQIGRNDDCPCGSGKKYKKCCGKNA) form a disordered region. Residues Cys-857, Cys-859, Cys-868, and Cys-869 each contribute to the Zn(2+) site. The segment covering 863 to 873 (KKYKKCCGKNA) has biased composition (basic residues).

The protein belongs to the SecA family. Monomer and homodimer. Part of the essential Sec protein translocation apparatus which comprises SecA, SecYEG and auxiliary proteins SecDF. Other proteins may also be involved. Zn(2+) is required as a cofactor.

The protein resides in the cell membrane. It localises to the cytoplasm. It catalyses the reaction ATP + H2O + cellular proteinSide 1 = ADP + phosphate + cellular proteinSide 2.. Its function is as follows. Part of the Sec protein translocase complex. Interacts with the SecYEG preprotein conducting channel. Has a central role in coupling the hydrolysis of ATP to the transfer of proteins into and across the cell membrane, serving as an ATP-driven molecular motor driving the stepwise translocation of polypeptide chains across the membrane. This chain is Protein translocase subunit SecA, found in Desulforamulus reducens (strain ATCC BAA-1160 / DSM 100696 / MI-1) (Desulfotomaculum reducens).